The chain runs to 408 residues: UV excision repair protein RAD23 homolog B (408 aa).

The Ubiquitin-like domain maps to methionine 1–alanine 79. The segment covering valine 80–proline 111 has biased composition (low complexity). Positions valine 80–leucine 176 are disordered. Residues alanine 112–threonine 122 show a composition bias toward pro residues. Low complexity predominate over residues proline 123–alanine 143. The segment covering lysine 144–valine 153 has biased composition (basic and acidic residues). Positions glutamate 154 to serine 174 are enriched in low complexity. A phosphothreonine mark is found at threonine 155 and threonine 164. Serine 174 is modified (phosphoserine). Residue threonine 186 is modified to Phosphothreonine. Residues glutamine 188–glycine 228 form the UBA 1 domain. Serine 199 is subject to Phosphoserine. Residue tyrosine 202 is modified to Phosphotyrosine. The tract at residues glutamine 236–proline 274 is disordered. The segment covering alanine 255–threonine 268 has biased composition (low complexity). The 44-residue stretch at histidine 273–isoleucine 316 folds into the STI1 domain. The 41-residue stretch at proline 363 to glutamine 403 folds into the UBA 2 domain.

This sequence belongs to the RAD23 family. Component of the XPC complex composed of XPC, RAD23B and CETN2. Interacts with NGLY1 and PSMC1. Interacts with ATXN3. Interacts with PSMD4 and PSMC5. Interacts with AMFR. Interacts with VCP; the interaction is indirect and mediated by NGLY1.

Its subcellular location is the nucleus. It is found in the cytoplasm. Its function is as follows. Multiubiquitin chain receptor involved in modulation of proteasomal degradation. Binds to polyubiquitin chains. Proposed to be capable to bind simultaneously to the 26S proteasome and to polyubiquitinated substrates and to deliver ubiquitinated proteins to the proteasome. May play a role in endoplasmic reticulum-associated degradation (ERAD) of misfolded glycoproteins by association with PNGase and delivering deglycosylated proteins to the proteasome. Functionally, involved in global genome nucleotide excision repair (GG-NER) by acting as component of the XPC complex. Cooperatively with CETN2 appears to stabilize XPC. May protect XPC from proteasomal degradation. The XPC complex is proposed to represent the first factor bound at the sites of DNA damage and together with other core recognition factors, XPA, RPA and the TFIIH complex, is part of the pre-incision (or initial recognition) complex. The XPC complex recognizes a wide spectrum of damaged DNA characterized by distortions of the DNA helix such as single-stranded loops, mismatched bubbles or single-stranded overhangs. The orientation of XPC complex binding appears to be crucial for inducing a productive NER. XPC complex is proposed to recognize and to interact with unpaired bases on the undamaged DNA strand which is followed by recruitment of the TFIIH complex and subsequent scanning for lesions in the opposite strand in a 5'-to-3' direction by the NER machinery. Cyclobutane pyrimidine dimers (CPDs) which are formed upon UV-induced DNA damage esacpe detection by the XPC complex due to a low degree of structural perurbation. Instead they are detected by the UV-DDB complex which in turn recruits and cooperates with the XPC complex in the respective DNA repair. In vitro, the XPC:RAD23B dimer is sufficient to initiate NER; it preferentially binds to cisplatin and UV-damaged double-stranded DNA and also binds to a variety of chemically and structurally diverse DNA adducts. XPC:RAD23B contacts DNA both 5' and 3' of a cisplatin lesion with a preference for the 5' side. XPC:RAD23B induces a bend in DNA upon binding. XPC:RAD23B stimulates the activity of DNA glycosylases TDG and SMUG1. The sequence is that of UV excision repair protein RAD23 homolog B (RAD23B) from Bos taurus (Bovine).